Consider the following 918-residue polypeptide: Cell cycle and apoptosis regulator protein 2 (918 aa).

The interval 1-35 (MSQFKRQRINPLPGGRNFSGTASTSLLGPPPGLLT) is disordered. Thr35 is subject to Phosphothreonine. Lys112 carries the post-translational modification N6-acetyllysine; by KAT8. An N6-methyllysine modification is found at Lys123. Position 124 is a phosphoserine (Ser124). Disordered regions lie at residues 179–219 (NRFP…KPRH), 446–510 (KAAE…PAVI), and 568–637 (VSPP…ASED). Residue Arg180 is modified to Omega-N-methylarginine. N6-acetyllysine; by KAT8 is present on Lys215. Composition is skewed to low complexity over residues 447–468 (AAEA…EQAP) and 482–492 (AETPEATTQQE). Thr454 is subject to Phosphothreonine; by ATM, ATR and CK2. Residue Thr484 is modified to Phosphothreonine. At Ser569 the chain carries Phosphoserine. Residues 572 to 597 (EPEKEEAAKEEEAIKEEVVKEPKDEA) show a composition bias toward basic and acidic residues. Residue Lys586 forms a Glycyl lysine isopeptide (Lys-Gly) (interchain with G-Cter in SUMO2 and SUMO3); alternate linkage. Residue Lys586 forms a Glycyl lysine isopeptide (Lys-Gly) (interchain with G-Cter in SUMO2); alternate linkage. Residues 605 to 665 (ESEAPLKEDG…EEFAGAKLED (61 aa)) are interaction with MCC. A phosphoserine mark is found at Ser622, Ser670, Ser673, Ser676, Ser682, and Ser803. The tract at residues 699 to 918 (DCLLAFVFFD…VEKEEPAPSN (220 aa)) is interaction with NR1D1. Residues 824–904 (LENRIHTLEL…QLEIQRVVEK (81 aa)) are a coiled coil. A Phosphothreonine modification is found at Thr892.

In terms of assembly, component of the DBIRD complex. Interacts with ZNF326/ZIRD; the interaction is direct. Interacts (via N-terminus) with SIRT1, which inhibits the deacetylation of substrates. Interacts (via N-terminus) with SUV39H1; this interaction abolishes the interaction with SIRT1. Component of a nuclear receptor-mediated transcription complex composed of at least ZNF335, CCAR2 and EMSY; the complex stimulates the transcription of nuclear receptor target genes such as SOX9 and HOXA1. Within the complex interacts with EMSY and interacts with ZNF335 (via C-terminus). Components of this complex may associate with components of a histone methylation complex to form a complex at least composed of ZNF335, HCFC1, CCAR2, EMSY, MKI67, RBBP5, ASH2L and WDR5. Within this complex, interacts with ASH2L. Interacts with NR1D1. Interacts (via N-terminus) with ESR1 and ESR2. Interacts (via N-terminus) with HDAC3 (via C-terminus). Interacts with HDAC1 and MED2F. Interacts with MCC. Interacts (via N-terminus) with NR1H2 and NR1H3 in a ligand-independent manner. Interacts with CSNK2A1. Interacts (via N-terminus) with p53/TP53. Interacts (via N-terminus) with BRCA1 (via the BRCT domains). Interacts (via N-terminus) with CHEK2 (via protein kinase domain). Interacts with PSEM3. Interacts (via N-terminus) with PSIA3 and SENP1. The sumoylated form shows a preferential interaction with SIRT1 as compared to its unmodified form. Interacts with CECR2; may form part of the CERF-1 and/or CEF-5 ISWI chromatin remodeling complexes in embryonic stem cells. Post-translationally, ATM/ATR-mediated phosphorylation at Thr-454 upon DNA damage promotes binding to SIRT1. Phosphorylation at Thr-454 promotes its sumoylation by switching the binding partner of CCAR2 from SENP1 to PIAS3. Acetylation at Lys-112 and Lys-215 by KAT8 prevents inhibitory binding to SIRT1 and increases its deacetylase activity. In terms of processing, genotoxic stress induces its sumoylation and sumoylation promotes the SIRT1-CCAR2 interaction which in turn inhibits SIRT1-mediated deacetylation of p53/TP53. Sumoylation leads to transcriptional activation of p53/TP53 by sequestering SIRT1 from p53/TP53. Desumoylated by SENP1.

The protein resides in the nucleus. The protein localises to the cytoplasm. It localises to the cytoskeleton. It is found in the spindle. Functionally, core component of the DBIRD complex, a multiprotein complex that acts at the interface between core mRNP particles and RNA polymerase II (RNAPII) and integrates transcript elongation with the regulation of alternative splicing: the DBIRD complex affects local transcript elongation rates and alternative splicing of a large set of exons embedded in (A + T)-rich DNA regions. Inhibits SIRT1 deacetylase activity leading to increasing levels of p53/TP53 acetylation and p53-mediated apoptosis. Inhibits SUV39H1 methyltransferase activity. Mediates ligand-dependent transcriptional activation by nuclear hormone receptors. Plays a critical role in maintaining genomic stability and cellular integrity following UV-induced genotoxic stress. Regulates the circadian expression of the core clock components NR1D1 and BMAL1. Enhances the transcriptional repressor activity of NR1D1 through stabilization of NR1D1 protein levels by preventing its ubiquitination and subsequent degradation. Represses the ligand-dependent transcriptional activation function of ESR2. Acts as a regulator of PCK1 expression and gluconeogenesis by a mechanism that involves, at least in part, both NR1D1 and SIRT1. Negatively regulates the deacetylase activity of HDAC3 and can alter its subcellular localization. Positively regulates the beta-catenin pathway (canonical Wnt signaling pathway) and is required for MCC-mediated repression of the beta-catenin pathway. Represses ligand-dependent transcriptional activation function of NR1H2 and NR1H3 and inhibits the interaction of SIRT1 with NR1H3. Plays an important role in tumor suppression through p53/TP53 regulation; stabilizes p53/TP53 by affecting its interaction with ubiquitin ligase MDM2. Represses the transcriptional activator activity of BRCA1. Inhibits SIRT1 in a CHEK2 and PSEM3-dependent manner and inhibits the activity of CHEK2 in vitro. The polypeptide is Cell cycle and apoptosis regulator protein 2 (CCAR2) (Pongo abelii (Sumatran orangutan)).